A 594-amino-acid chain; its full sequence is MTSFTESKKLDEIESPVPEIIVPSTTNGNGTIESYKEKSVGTSFLDFFRSYKLRPDNEFAEVHNSEDFLKPRHLQMIAIGSCIGTGLFVSTGKSLKNAGPGSLMINFIILSAMILALILSLGEMCCFLPNQSSITMYTGRLLNNNIGFAQSWLYFWIWLTVLPSEISAACEVVDFWTTQHLNPAIWVTIFLAYVVLVNAFGARSYGECEFVSSFLKVVIVIIFFFVAIIINCGAAPKGGYIGAHYWHHPGSFRNGFKGFCSVFISSAYSLSGTENIGTAAGNTSNPQRAIPSAVKKVFYRMGFFYIITIFLITLVVPYDNPDLGNVSPFIIAIKNGGIHVLPHITNAVILVSVLSVGNAAVFAASRNAMALVKQGWAPRFLGRVDQKGRPVISYLCSLAMACIAYVNAAPDGSVVFDWLMSVSGGGAFVIWGLSFIDHIRLRYAMKAQKIPDTVLPYKFPGSVYLSYYGVLINFLALCALVYISIFPVTHEKPSAYGFFVSFLGPSVFIAYLLISPIFVKPTFQSLKDVDLTTGRYDLVNSQMYVAESSTSELSEKDLTKPNLQSNDNKNSEDLESNTPPQKKSALQKVADFLC.

A run of 12 helical transmembrane segments spans residues 75–95 (QMIA…GKSL), 101–121 (GSLM…ILSL), 146–166 (IGFA…PSEI), 181–201 (LNPA…NAFG), 210–230 (FVSS…AIII), 297–317 (VFYR…LVVP), 323–343 (LGNV…VLPH), 344–364 (ITNA…VFAA), 390–410 (PVIS…NAAP), 416–436 (FDWL…LSFI), 468–488 (YGVL…IFPV), and 498–518 (FFVS…SPIF). A disordered region spans residues 550–587 (TSELSEKDLTKPNLQSNDNKNSEDLESNTPPQKKSALQ).

This sequence belongs to the amino acid-polyamine-organocation (APC) superfamily.

The protein resides in the membrane. This is Amino-acid permease 1 (aap1) from Schizosaccharomyces pombe (strain 972 / ATCC 24843) (Fission yeast).